We begin with the raw amino-acid sequence, 211 residues long: Dual specificity protein phosphatase 26 (211 aa).

Residues 60–207 enclose the Tyrosine-protein phosphatase domain; it reads NHADEVWPGL…LLALDRRLRQ (148 aa). C152 (phosphocysteine intermediate) is an active-site residue.

Belongs to the protein-tyrosine phosphatase family. Non-receptor class dual specificity subfamily. As to quaternary structure, interacts with HSF4. Brain and skeletal muscle. In the brain it is expressed ubiquitously except in the hippocampus.

It is found in the cytoplasm. The protein resides in the nucleus. It localises to the golgi apparatus. The catalysed reaction is O-phospho-L-tyrosyl-[protein] + H2O = L-tyrosyl-[protein] + phosphate. The enzyme catalyses O-phospho-L-seryl-[protein] + H2O = L-seryl-[protein] + phosphate. It carries out the reaction O-phospho-L-threonyl-[protein] + H2O = L-threonyl-[protein] + phosphate. Functionally, inactivates MAPK1 and MAPK3 which leads to dephosphorylation of heat shock factor protein 4 and a reduction in its DNA-binding activity. This is Dual specificity protein phosphatase 26 (Dusp26) from Mus musculus (Mouse).